Reading from the N-terminus, the 345-residue chain is Neurotrimin (345 aa).

The N-terminal stretch at 1–30 (MGVCGSLFLPWKCLVVVSLRLLFLVPTGVP) is a signal peptide. 3 Ig-like C2-type domains span residues 39 to 126 (PKAM…PKTS), 136 to 218 (PKIV…VKVT), and 222 to 309 (PPYI…ASIT). 3 N-linked (GlcNAc...) asparagine glycosylation sites follow: Asn-44, Asn-70, and Asn-152. The cysteines at positions 57 and 115 are disulfide-linked. 2 disulfide bridges follow: Cys-157/Cys-201 and Cys-243/Cys-295. 4 N-linked (GlcNAc...) asparagine glycosylation sites follow: Asn-284, Asn-292, Asn-305, and Asn-321. Asn-321 is lipidated: GPI-anchor amidated asparagine. Residues 322–345 (GTSSRRAGCLWLLPLLVLHLLLKF) constitute a propeptide, removed in mature form.

This sequence belongs to the immunoglobulin superfamily. IgLON family.

The protein localises to the cell membrane. Functionally, neural cell adhesion molecule. The sequence is that of Neurotrimin (NTM) from Bos taurus (Bovine).